Consider the following 352-residue polypeptide: Thymidine kinase (352 aa).

32-39 (GVYGIGKS) lines the ATP pocket. The Proton acceptor role is filled by E60. Y78 and Q102 together coordinate substrate. ATP is bound at residue R192. Residue R198 participates in substrate binding.

Belongs to the herpesviridae thymidine kinase family. In terms of assembly, homodimer.

It carries out the reaction thymidine + ATP = dTMP + ADP + H(+). In terms of biological role, catalyzes the transfer of the gamma-phospho group of ATP to thymidine to generate dTMP in the salvage pathway of pyrimidine synthesis. The dTMP serves as a substrate for DNA polymerase during viral DNA replication. Allows the virus to be reactivated and to grow in non-proliferative cells lacking a high concentration of phosphorylated nucleic acid precursors. This is Thymidine kinase from Equus caballus (Horse).